The following is a 302-amino-acid chain: Recombination-associated protein RdgC (302 aa).

The protein belongs to the RdgC family.

Its subcellular location is the cytoplasm. It localises to the nucleoid. In terms of biological role, may be involved in recombination. The chain is Recombination-associated protein RdgC from Xylella fastidiosa (strain 9a5c).